The primary structure comprises 451 residues: Phosphoglucosamine mutase (451 aa).

Ser104 functions as the Phosphoserine intermediate in the catalytic mechanism. Mg(2+)-binding residues include Ser104, Asp242, Asp244, and Asp246. Position 104 is a phosphoserine (Ser104).

It belongs to the phosphohexose mutase family. Requires Mg(2+) as cofactor. In terms of processing, activated by phosphorylation.

It carries out the reaction alpha-D-glucosamine 1-phosphate = D-glucosamine 6-phosphate. In terms of biological role, catalyzes the conversion of glucosamine-6-phosphate to glucosamine-1-phosphate. This chain is Phosphoglucosamine mutase, found in Kocuria rhizophila (strain ATCC 9341 / DSM 348 / NBRC 103217 / DC2201).